The following is an 844-amino-acid chain: Probable inorganic carbon transporter subunit DabA 1 (844 aa).

Residues cysteine 359, aspartate 361, histidine 543, and cysteine 558 each coordinate Zn(2+).

Belongs to the inorganic carbon transporter (TC 9.A.2) DabA family. As to quaternary structure, forms a complex with DabB. Zn(2+) serves as cofactor.

Its subcellular location is the cell inner membrane. In terms of biological role, part of an energy-coupled inorganic carbon pump. This Bradyrhizobium sp. (strain BTAi1 / ATCC BAA-1182) protein is Probable inorganic carbon transporter subunit DabA 1.